The following is a 970-amino-acid chain: Probable histidine kinase 6 (970 aa).

Topologically, residues 1 to 12 are cytoplasmic; sequence MGKPEARSGWRN. The chain crosses the membrane as a helical span at residues 13 to 33; the sequence is AAAAAWVLVAVACAAYMHWHL. Residues 34–306 lie on the Extracellular side of the membrane; sequence RRETMDRAEE…YRQKPPLPWS (273 aa). Residues 82–294 form the CHASE domain; the sequence is FPSAIDQDTF…GDPFRAHEMR (213 aa). The helical transmembrane segment at 307 to 327 threads the bilayer; the sequence is AITNPLGTFVIWMLVGYIICA. Residues 328–970 are Cytoplasmic-facing; that stretch reads AWSRYDKVSE…LVVGTKESAV (643 aa). One can recognise a Histidine kinase domain in the interval 362–651; sequence TVSHEIRTPM…TFTFSAVLKR (290 aa). The residue at position 365 (His365) is a Phosphohistidine; by autocatalysis. 2 Response regulatory domains span residues 676–802 and 827–962; these read KAIL…QQLL and NILI…SRLV. At Asp877 the chain carries 4-aspartylphosphate.

Post-translationally, activation probably requires a transfer of a phosphate group between a His in the transmitter domain and an Asp of the receiver domain. As to expression, highly expressed in spikelets and at lower levels in roots, young leaves, mature leaves and stems.

Its subcellular location is the cell membrane. It catalyses the reaction ATP + protein L-histidine = ADP + protein N-phospho-L-histidine.. Functionally, cytokinin receptor related to bacterial two-component regulators. Functions as a histidine kinase and transmits the stress signal to a downstream MAPK cascade. This chain is Probable histidine kinase 6, found in Oryza sativa subsp. japonica (Rice).